The chain runs to 397 residues: Sexual differentiation process protein isp7 (397 aa).

A Fe2OG dioxygenase domain is found at 255 to 353 (PTTSIRLLRY…RYTIPFFLQG (99 aa)).

It belongs to the iron/ascorbate-dependent oxidoreductase family.

The chain is Sexual differentiation process protein isp7 (isp7) from Schizosaccharomyces pombe (strain 972 / ATCC 24843) (Fission yeast).